Here is a 544-residue protein sequence, read N- to C-terminus: Bacillolysin (544 aa).

Residues 1 to 25 form the signal peptide; sequence MNKRAMLGAIGLAFGLMAWPFGASA. A propeptide spans 26–225 (activation peptide); the sequence is KGKSMVWNEQ…DEAKPGGAQP (200 aa). 4 residues coordinate Ca(2+): aspartate 285, aspartate 287, glutamine 289, and aspartate 366. Residue histidine 370 coordinates Zn(2+). Glutamate 371 is a catalytic residue. 2 residues coordinate Zn(2+): histidine 374 and glutamate 394. Ca(2+)-binding residues include glutamate 405, asparagine 411, aspartate 413, glutamate 415, glutamate 418, tyrosine 421, threonine 422, valine 425, and aspartate 428. Histidine 459 serves as the catalytic Proton donor.

The protein belongs to the peptidase M4 family. Ca(2+) is required as a cofactor. It depends on Zn(2+) as a cofactor.

Its subcellular location is the secreted. It carries out the reaction Similar, but not identical, to that of thermolysin.. Its function is as follows. Extracellular zinc metalloprotease. This Bacillus caldolyticus protein is Bacillolysin (npr).